Reading from the N-terminus, the 556-residue chain is WD repeat-containing protein srw1 (556 aa).

Residues 1–80 form a disordered region; sequence MDEFDGFTRP…NEGDRFIPSR (80 aa). The span at 12-37 shows a compositional bias: low complexity; sequence SSNSSANRNSNNSMNRVENNNSNSDS. Positions 43-55 are enriched in basic and acidic residues; it reads SRGDAHTRMRQGF. Ser-62 carries the post-translational modification Phosphoserine. The segment covering 69–78 has biased composition (basic and acidic residues); sequence RTNEGDRFIP. A Phosphothreonine modification is found at Thr-98. Positions 126–146 are enriched in polar residues; sequence TFNNSPIATPNTTIGVSTPRT. A disordered region spans residues 126 to 173; it reads TFNNSPIATPNTTIGVSTPRTDSGIDDIELTQRTPPSSSHTSSSILQN. A compositionally biased stretch (low complexity) spans 159-169; sequence TPPSSSHTSSS. Thr-177 carries the phosphothreonine modification. A phosphoserine mark is found at Ser-187 and Ser-214. WD repeat units follow at residues 246–285, 289–328, 331–368, 372–411, 414–456, 458–499, and 502–541; these read GLAG…VTVM, YPTD…KTRT, GHTE…HYFR, AHRQ…PLYS, NHIA…MLHN, DTGS…RVGT, and GHTD…SKHS.

It belongs to the WD repeat CDC20/Fizzy family. Post-translationally, phosphorylated by cdc2-cdc13-CDK complex. This targets srw1 for proteolysis which in turn promotes cdc13 turnover. Dephosphorylated during G1 arrest.

It is found in the nucleus. Has a role in cell differentiation and cell cycling by negatively regulating cig2 and cdc12-associated cdc2. Down-regulates the level of cdc13, particularly in a nitrogen deprived environment. Regulator of cell cycle G1 phase progression. Prevents onset of mitosis during the pre-Start G1 period. Required for degradation of cdc13 mitotic cyclin B during G1 arrest but not during mitotic exit. The chain is WD repeat-containing protein srw1 (srw1) from Schizosaccharomyces pombe (strain 972 / ATCC 24843) (Fission yeast).